Consider the following 511-residue polypeptide: 2-isopropylmalate synthase (511 aa).

The region spanning L5–V267 is the Pyruvate carboxyltransferase domain. Mn(2+) is bound by residues D14, H202, H204, and N238. The tract at residues K393–V511 is regulatory domain.

Belongs to the alpha-IPM synthase/homocitrate synthase family. LeuA type 1 subfamily. Homodimer. It depends on Mn(2+) as a cofactor.

It is found in the cytoplasm. The catalysed reaction is 3-methyl-2-oxobutanoate + acetyl-CoA + H2O = (2S)-2-isopropylmalate + CoA + H(+). It participates in amino-acid biosynthesis; L-leucine biosynthesis; L-leucine from 3-methyl-2-oxobutanoate: step 1/4. In terms of biological role, catalyzes the condensation of the acetyl group of acetyl-CoA with 3-methyl-2-oxobutanoate (2-ketoisovalerate) to form 3-carboxy-3-hydroxy-4-methylpentanoate (2-isopropylmalate). The sequence is that of 2-isopropylmalate synthase from Thiobacillus denitrificans (strain ATCC 25259 / T1).